The chain runs to 102 residues: Urease subunit beta (102 aa).

Belongs to the urease beta subunit family. In terms of assembly, heterotrimer of UreA (gamma), UreB (beta) and UreC (alpha) subunits. Three heterotrimers associate to form the active enzyme.

The protein localises to the cytoplasm. The catalysed reaction is urea + 2 H2O + H(+) = hydrogencarbonate + 2 NH4(+). Its pathway is nitrogen metabolism; urea degradation; CO(2) and NH(3) from urea (urease route): step 1/1. The protein is Urease subunit beta of Pseudomonas savastanoi pv. phaseolicola (strain 1448A / Race 6) (Pseudomonas syringae pv. phaseolicola (strain 1448A / Race 6)).